The sequence spans 426 residues: COP9 signalosome complex subunit 6 (426 aa).

The 142-residue stretch at 14 to 155 (VLLHPLVIMQ…AGTTRKLPLF (142 aa)) folds into the MPN domain. A disordered region spans residues 320 to 426 (PVRFKSQHLG…NESDESSQAS (107 aa)). Positions 334-347 (ADDDDYFDDEDLEN) are enriched in acidic residues.

The protein belongs to the peptidase M67A family. CSN6 subfamily. Component of the CSN complex, probably composed of csn-1, csn-2, csn-3, csn-4, csn-5, csn-6 and csn-7. Within the complex it probably interacts directly with csn-2 and csn-4. Interacts with rbx-1.

It is found in the cytoplasm. The protein resides in the nucleus. Component of the COP9 signalosome complex (CSN), a complex involved in various cellular and developmental processes. The CSN complex is an essential regulator of the ubiquitin (Ubl) conjugation pathway by mediating the deneddylation of the cullin subunits of the SCF-type E3 ligase complexes, leading to decrease the Ubl ligase activity of SCF. The CSN complex plays an essential role in embryogenesis and oogenesis and is required to regulate microtubule stability in the early embryo. Mediates mei-3/katanin targeting for degradation at the meiosis to mitosis transition via deneddylation of cul-3. This Caenorhabditis elegans protein is COP9 signalosome complex subunit 6 (csn-6).